Reading from the N-terminus, the 355-residue chain is Tetraacyldisaccharide 4'-kinase (355 aa).

64–71 lines the ATP pocket; sequence YVGGTGKT. The disordered stretch occupies residues 206-226; it reads NRAPQSSATPTAASGQGPRRA. A compositionally biased stretch (low complexity) spans 208–222; the sequence is APQSSATPTAASGQG.

The protein belongs to the LpxK family.

The catalysed reaction is a lipid A disaccharide + ATP = a lipid IVA + ADP + H(+). The protein operates within glycolipid biosynthesis; lipid IV(A) biosynthesis; lipid IV(A) from (3R)-3-hydroxytetradecanoyl-[acyl-carrier-protein] and UDP-N-acetyl-alpha-D-glucosamine: step 6/6. Functionally, transfers the gamma-phosphate of ATP to the 4'-position of a tetraacyldisaccharide 1-phosphate intermediate (termed DS-1-P) to form tetraacyldisaccharide 1,4'-bis-phosphate (lipid IVA). This Bordetella petrii (strain ATCC BAA-461 / DSM 12804 / CCUG 43448) protein is Tetraacyldisaccharide 4'-kinase.